We begin with the raw amino-acid sequence, 59 residues long: Small, acid-soluble spore protein H 2 (59 aa).

The protein belongs to the SspH family.

Its subcellular location is the spore core. This Bacillus anthracis protein is Small, acid-soluble spore protein H 2 (sspH2).